Reading from the N-terminus, the 361-residue chain is Phospho-N-acetylmuramoyl-pentapeptide-transferase (361 aa).

Transmembrane regions (helical) follow at residues 25-45 (RGILAALTALFLSLWMGPAVI), 73-93 (TMGGSLILLTVTLSVLLWGDL), 98-118 (VWLVLAVMICFGAIGWYDDWI), 139-159 (IFGLAAGLFLYYTADVPAAIT), 168-188 (IALPLAGVSFVVIAYFWIVGF), 200-220 (GLAIMPTVLVACALGVFAYAS), 237-257 (AGELIIICSAIAGAGLGFLWF), 264-284 (VFMGDIGALSLGAVLGTVAVI), 289-309 (LVLVIMGGVFVIETLSVMIQV), and 339-359 (VIVRFWIISVVLVLIGLATLK).

It belongs to the glycosyltransferase 4 family. MraY subfamily. Mg(2+) is required as a cofactor.

It localises to the cell inner membrane. The catalysed reaction is UDP-N-acetyl-alpha-D-muramoyl-L-alanyl-gamma-D-glutamyl-meso-2,6-diaminopimeloyl-D-alanyl-D-alanine + di-trans,octa-cis-undecaprenyl phosphate = di-trans,octa-cis-undecaprenyl diphospho-N-acetyl-alpha-D-muramoyl-L-alanyl-D-glutamyl-meso-2,6-diaminopimeloyl-D-alanyl-D-alanine + UMP. Its pathway is cell wall biogenesis; peptidoglycan biosynthesis. Functionally, catalyzes the initial step of the lipid cycle reactions in the biosynthesis of the cell wall peptidoglycan: transfers peptidoglycan precursor phospho-MurNAc-pentapeptide from UDP-MurNAc-pentapeptide onto the lipid carrier undecaprenyl phosphate, yielding undecaprenyl-pyrophosphoryl-MurNAc-pentapeptide, known as lipid I. This is Phospho-N-acetylmuramoyl-pentapeptide-transferase from Xanthomonas campestris pv. campestris (strain 8004).